The following is a 466-amino-acid chain: Methylenetetrahydrofolate--tRNA-(uracil-5-)-methyltransferase TrmFO (466 aa).

12–17 contacts FAD; that stretch reads GAGLAG.

This sequence belongs to the MnmG family. TrmFO subfamily. It depends on FAD as a cofactor.

Its subcellular location is the cytoplasm. The enzyme catalyses uridine(54) in tRNA + (6R)-5,10-methylene-5,6,7,8-tetrahydrofolate + NADH + H(+) = 5-methyluridine(54) in tRNA + (6S)-5,6,7,8-tetrahydrofolate + NAD(+). It catalyses the reaction uridine(54) in tRNA + (6R)-5,10-methylene-5,6,7,8-tetrahydrofolate + NADPH + H(+) = 5-methyluridine(54) in tRNA + (6S)-5,6,7,8-tetrahydrofolate + NADP(+). In terms of biological role, catalyzes the folate-dependent formation of 5-methyl-uridine at position 54 (M-5-U54) in all tRNAs. The chain is Methylenetetrahydrofolate--tRNA-(uracil-5-)-methyltransferase TrmFO from Synechococcus elongatus (strain ATCC 33912 / PCC 7942 / FACHB-805) (Anacystis nidulans R2).